Here is an 867-residue protein sequence, read N- to C-terminus: Elongation factor 2 (867 aa).

Residues 17 to 368 (HNIRNLSVVA…MIVLHLPSPV (352 aa)) enclose the tr-type G domain. GTP is bound at residue 26–33 (AHVDHGKS). 2 positions are modified to phosphothreonine: Thr-57 and Thr-59. GTP is bound by residues 176–179 (NKLD) and 231–233 (SGL). His-723 carries the diphthamide modification.

The protein belongs to the TRAFAC class translation factor GTPase superfamily. Classic translation factor GTPase family. EF-G/EF-2 subfamily. Phosphorylation by EF-2 kinase completely inactivates EF-2.

It localises to the cytoplasm. The enzyme catalyses GTP + H2O = GDP + phosphate + H(+). Its function is as follows. Catalyzes the GTP-dependent ribosomal translocation step during translation elongation. During this step, the ribosome changes from the pre-translocational (PRE) to the post-translocational (POST) state as the newly formed A-site-bound peptidyl-tRNA and P-site-bound deacylated tRNA move to the P and E sites, respectively. Catalyzes the coordinated movement of the two tRNA molecules, the mRNA and conformational changes in the ribosome. This chain is Elongation factor 2, found in Blastocystis hominis.